We begin with the raw amino-acid sequence, 338 residues long: Transcription factor AP-4 (338 aa).

The bHLH domain maps to 48–99 (IRREIANSNERRRMQSINAGFQSLKTLIPHTDGEKLSKAAILQQTAEYIFSL). Positions 100–120 (EQEKTRLLQQNTQLKRFIQEL) are leucine-zipper 1. Positions 118-141 (QELSGSSPKRRRAEDKDEGIGSPD) are disordered. Residues Ser123, Ser124, and Ser139 each carry the phosphoserine modification. Lys147 participates in a covalent cross-link: Glycyl lysine isopeptide (Lys-Gly) (interchain with G-Cter in SUMO2). Positions 151 to 179 (LRREMIELRQQLDKERSVRMMLEEQVRSL) are leucine-zipper 2. Residues Lys187, Lys189, and Lys285 each participate in a glycyl lysine isopeptide (Lys-Gly) (interchain with G-Cter in SUMO2) cross-link. Positions 283–294 (QEKQELEEEQRR) are enriched in basic and acidic residues. Positions 283-338 (QEKQELEEEQRRAVIVKPVRSCPEAPTSDTASDSEASDSDAMDQSREEPSGDGELP) are disordered.

As to quaternary structure, efficient DNA binding requires dimerization with another bHLH protein. Homodimer.

The protein resides in the nucleus. Transcription factor that activates both viral and cellular genes by binding to the symmetrical DNA sequence 5'-CAGCTG-3'. In Homo sapiens (Human), this protein is Transcription factor AP-4 (TFAP4).